Consider the following 266-residue polypeptide: BTB/POZ domain-containing protein KCTD2 (266 aa).

N-acetylalanine is present on alanine 2. Residues 38–79 (GRHPADTAASPPPPRTAGARARTSGADGRRRGRPLGPAQRGR) are disordered. Over residues 53–63 (TAGARARTSGA) the composition is skewed to low complexity. Residues 76–174 (QRGRYLLRDT…LVKERIRDNE (99 aa)) enclose the BTB domain.

This is BTB/POZ domain-containing protein KCTD2 (Kctd2) from Mus musculus (Mouse).